We begin with the raw amino-acid sequence, 365 residues long: Chorismate synthase (365 aa).

The segment at 41–60 (MQHDLDRRRPGTSRYTTARR) is disordered. Arginine 48 and arginine 54 together coordinate NADP(+). Residues 125–127 (RSS), 238–239 (NA), glycine 278, 293–297 (KPTSS), and arginine 319 contribute to the FMN site.

The protein belongs to the chorismate synthase family. In terms of assembly, homotetramer. It depends on FMNH2 as a cofactor.

The catalysed reaction is 5-O-(1-carboxyvinyl)-3-phosphoshikimate = chorismate + phosphate. The protein operates within metabolic intermediate biosynthesis; chorismate biosynthesis; chorismate from D-erythrose 4-phosphate and phosphoenolpyruvate: step 7/7. In terms of biological role, catalyzes the anti-1,4-elimination of the C-3 phosphate and the C-6 proR hydrogen from 5-enolpyruvylshikimate-3-phosphate (EPSP) to yield chorismate, which is the branch point compound that serves as the starting substrate for the three terminal pathways of aromatic amino acid biosynthesis. This reaction introduces a second double bond into the aromatic ring system. The protein is Chorismate synthase of Shewanella amazonensis (strain ATCC BAA-1098 / SB2B).